Consider the following 429-residue polypeptide: Glutamate-1-semialdehyde 2,1-aminomutase (429 aa).

At lysine 265 the chain carries N6-(pyridoxal phosphate)lysine.

This sequence belongs to the class-III pyridoxal-phosphate-dependent aminotransferase family. HemL subfamily. In terms of assembly, homodimer. The cofactor is pyridoxal 5'-phosphate.

Its subcellular location is the cytoplasm. The catalysed reaction is (S)-4-amino-5-oxopentanoate = 5-aminolevulinate. Its pathway is porphyrin-containing compound metabolism; protoporphyrin-IX biosynthesis; 5-aminolevulinate from L-glutamyl-tRNA(Glu): step 2/2. This chain is Glutamate-1-semialdehyde 2,1-aminomutase, found in Shewanella halifaxensis (strain HAW-EB4).